Here is a 334-residue protein sequence, read N- to C-terminus: Protein-methionine-sulfoxide reductase catalytic subunit MsrP (334 aa).

Residues 1–44 (MKKIRPLTEADVTAESAFFMQRRQVLKALGISAAALSLPSTAQA) constitute a signal peptide (tat-type signal). Mo-molybdopterin is bound by residues Asn-88, 91 to 92 (YE), Cys-146, Thr-181, Asn-233, Arg-238, and 249 to 251 (GIK).

This sequence belongs to the MsrP family. As to quaternary structure, heterodimer of a catalytic subunit (MsrP) and a heme-binding subunit (MsrQ). Mo-molybdopterin serves as cofactor. Post-translationally, predicted to be exported by the Tat system. The position of the signal peptide cleavage has not been experimentally proven.

It localises to the periplasm. The enzyme catalyses L-methionyl-[protein] + a quinone + H2O = L-methionyl-(S)-S-oxide-[protein] + a quinol. The catalysed reaction is L-methionyl-[protein] + a quinone + H2O = L-methionyl-(R)-S-oxide-[protein] + a quinol. Part of the MsrPQ system that repairs oxidized periplasmic proteins containing methionine sulfoxide residues (Met-O), using respiratory chain electrons. Thus protects these proteins from oxidative-stress damage caused by reactive species of oxygen and chlorine generated by the host defense mechanisms. MsrPQ is essential for the maintenance of envelope integrity under bleach stress, rescuing a wide series of structurally unrelated periplasmic proteins from methionine oxidation, including the primary periplasmic chaperone SurA and the lipoprotein Pal. The catalytic subunit MsrP is non-stereospecific, being able to reduce both (R-) and (S-) diastereoisomers of methionine sulfoxide. The polypeptide is Protein-methionine-sulfoxide reductase catalytic subunit MsrP (Salmonella arizonae (strain ATCC BAA-731 / CDC346-86 / RSK2980)).